The following is a 146-amino-acid chain: Probable calcium-binding protein CML32 (146 aa).

EF-hand domains lie at 1–33, 34–69, 73–108, and 109–144; these read MSVAEIFERVDKNKDGKISWDEFAEAIRAFSPS, ITSEEIDNMFREIDVDGDNQIDVAEYASCLMLGGEG, DEDIVMKEAFDLYDIDGDGKISASEIHVVLKRLGEK, and QTIAECIAMVRAVDADGDGFVSFEEFKTMMSCNNKK. Asp-11, Asn-13, Asp-15, Lys-17, Glu-22, Asp-47, Asp-49, Asp-51, Gln-53, Glu-58, Asp-86, Asp-88, Asp-90, Lys-92, Glu-97, Asp-122, Asp-124, Asp-126, and Glu-133 together coordinate Ca(2+).

In terms of biological role, potential calcium sensor. This Arabidopsis thaliana (Mouse-ear cress) protein is Probable calcium-binding protein CML32 (CML32).